Reading from the N-terminus, the 238-residue chain is Ubiquinone biosynthesis O-methyltransferase (238 aa).

The S-adenosyl-L-methionine site is built by Arg-40, Gly-59, Asp-80, and Met-125.

The protein belongs to the methyltransferase superfamily. UbiG/COQ3 family.

It carries out the reaction a 3-demethylubiquinol + S-adenosyl-L-methionine = a ubiquinol + S-adenosyl-L-homocysteine + H(+). It catalyses the reaction a 3-(all-trans-polyprenyl)benzene-1,2-diol + S-adenosyl-L-methionine = a 2-methoxy-6-(all-trans-polyprenyl)phenol + S-adenosyl-L-homocysteine + H(+). Its pathway is cofactor biosynthesis; ubiquinone biosynthesis. In terms of biological role, O-methyltransferase that catalyzes the 2 O-methylation steps in the ubiquinone biosynthetic pathway. The chain is Ubiquinone biosynthesis O-methyltransferase from Paracidovorax citrulli (strain AAC00-1) (Acidovorax citrulli).